Consider the following 559-residue polypeptide: Membrane protein insertase YidC (559 aa).

The chain crosses the membrane as a helical span at residues 6-26 (TVLWMIFSFSLLLLWNNWQIH). Residues 34–80 (GGPSPEQNAPATANNQAATNPASNTPAVPNAPAATSAPSSVPGSTAP) are disordered. The segment covering 42 to 80 (APATANNQAATNPASNTPAVPNAPAATSAPSSVPGSTAP) has biased composition (low complexity). 4 helical membrane-spanning segments follow: residues 367–387 (LLGN…AVFY), 441–461 (LPMV…LASV), 480–500 (PYFI…KLNP), and 510–530 (VMMV…AGLV).

Belongs to the OXA1/ALB3/YidC family. Type 1 subfamily. As to quaternary structure, interacts with the Sec translocase complex via SecD. Specifically interacts with transmembrane segments of nascent integral membrane proteins during membrane integration.

It localises to the cell inner membrane. Functionally, required for the insertion and/or proper folding and/or complex formation of integral membrane proteins into the membrane. Involved in integration of membrane proteins that insert both dependently and independently of the Sec translocase complex, as well as at least some lipoproteins. Aids folding of multispanning membrane proteins. This chain is Membrane protein insertase YidC, found in Bordetella avium (strain 197N).